The sequence spans 153 residues: Ribosomal RNA large subunit methyltransferase H (153 aa).

Residues isoleucine 75, glycine 103, and 121-126 (LSAMTF) contribute to the S-adenosyl-L-methionine site.

This sequence belongs to the RNA methyltransferase RlmH family. Homodimer.

The protein resides in the cytoplasm. The catalysed reaction is pseudouridine(1915) in 23S rRNA + S-adenosyl-L-methionine = N(3)-methylpseudouridine(1915) in 23S rRNA + S-adenosyl-L-homocysteine + H(+). Specifically methylates the pseudouridine at position 1915 (m3Psi1915) in 23S rRNA. The polypeptide is Ribosomal RNA large subunit methyltransferase H (Helicobacter hepaticus (strain ATCC 51449 / 3B1)).